We begin with the raw amino-acid sequence, 458 residues long: Ammonium transporter Rh type B (458 aa).

Over 1-13 (MAGSPSRAAGRRL) the chain is Cytoplasmic. The helical transmembrane segment at 14 to 34 (QLPLLCLFLQGATAVLFAVFV) threads the bilayer. Topologically, residues 35–61 (RYNHKTDAALWHRGNYSNADNEFYFRY) are extracellular. N49 is a glycosylation site (N-linked (GlcNAc...) asparagine). Residues 62-82 (PSFQDVHAMVFVGFGFLMVFL) traverse the membrane as a helical segment. The Cytoplasmic segment spans residues 83-86 (QRYG). A helical membrane pass occupies residues 87–107 (FSSVGFTFLLAAFALQWSTLV). Over 108-124 (QGFLHSFHSGHIHVGVE) the chain is Extracellular. The chain crosses the membrane as a helical span at residues 125 to 145 (SMINADFCAGAVLISFGAVLG). Residues 146–149 (KTGP) are Cytoplasmic-facing. Residues 150-170 (AQLLLMALLEVVLFGINEFVL) form a helical membrane-spanning segment. At 171-178 (LHLLGVRD) the chain is on the extracellular side. The helical transmembrane segment at 179-201 (AGGSMTIHTFGAYFGLVLSRVLY) threads the bilayer. Over 202-219 (RPQLEKSKHRQGSVYHSD) the chain is Cytoplasmic. A helical membrane pass occupies residues 220–240 (LFAMIGTIFLWIFWPSFNSAL). The Extracellular segment spans residues 241-251 (TALGAGQHRTA). The chain crosses the membrane as a helical span at residues 252-272 (LNTYYSLAASTLGTFALSALV). Topologically, residues 273 to 282 (GEDGRLDMVH) are cytoplasmic. A helical transmembrane segment spans residues 283-303 (IQNAALAGGVVVGTSSEMMLT). A topological domain (extracellular) is located at residue P304. The helical transmembrane segment at 305 to 325 (FGALAAGFLAGTVSTLGYKFF) threads the bilayer. Residues 326 to 346 (TPILESKFKVQDTCGVHNLHG) lie on the Cytoplasmic side of the membrane. The helical transmembrane segment at 347–367 (MPGVLGALLGVLVAGLATHEA) threads the bilayer. The Extracellular segment spans residues 368-393 (YGDGLESVFPLIAEGQRSATSQAMLQ). The helical transmembrane segment at 394–414 (LFGLFVTLMFASVGGGLGGLL) threads the bilayer. Residues 415–458 (LKLPFLDSPPDSQCYEDQVHWQVPGEHEDEAQRPLRVEEADTQA) are Cytoplasmic-facing. Residues 416-424 (KLPFLDSPP) form an interaction with ANK3 region. Positions 429–432 (YEDQ) match the Basolateral sorting signal motif. The tract at residues 439–458 (GEHEDEAQRPLRVEEADTQA) is disordered. Residues 444 to 458 (EAQRPLRVEEADTQA) are compositionally biased toward basic and acidic residues.

It belongs to the ammonium transporter (TC 2.A.49) family. Rh subfamily. Interacts (via C-terminus) with ANK2 and ANK3; required for targeting to the basolateral membrane. N-glycosylated.

Its subcellular location is the cell membrane. It localises to the basolateral cell membrane. It catalyses the reaction NH4(+)(in) = NH4(+)(out). The catalysed reaction is methylamine(out) = methylamine(in). The enzyme catalyses CO2(out) = CO2(in). In terms of biological role, ammonium transporter involved in the maintenance of acid-base homeostasis. Transports ammonium and its related derivative methylammonium across the basolateral plasma membrane of epithelial cells likely contributing to renal transepithelial ammonia transport and ammonia metabolism. May transport either NH4(+) or NH3 ammonia species predominantly mediating an electrogenic NH4(+) transport. May act as a CO2 channel providing for renal acid secretion. The chain is Ammonium transporter Rh type B (RHBG) from Papio hamadryas (Hamadryas baboon).